Reading from the N-terminus, the 554-residue chain is Glutamine--tRNA ligase (554 aa).

The 'HIGH' region motif lies at 34–44 (PEPNGYLHIGH). ATP-binding positions include 35 to 37 (EPN) and 41 to 47 (HIGHAKS). Residues Asp-67 and Tyr-212 each coordinate L-glutamine. ATP contacts are provided by residues Thr-231, 261 to 262 (RL), and 269 to 271 (MSK). A 'KMSKS' region motif is present at residues 268–272 (VMSKR). Residues 317-324 (TKQDNTIE) form an interaction with tRNA region.

The protein belongs to the class-I aminoacyl-tRNA synthetase family. As to quaternary structure, monomer.

Its subcellular location is the cytoplasm. It catalyses the reaction tRNA(Gln) + L-glutamine + ATP = L-glutaminyl-tRNA(Gln) + AMP + diphosphate. In Escherichia coli O17:K52:H18 (strain UMN026 / ExPEC), this protein is Glutamine--tRNA ligase.